The primary structure comprises 125 residues: uncharacterized protein (125 aa).

This is an uncharacterized protein from Aquifex aeolicus (strain VF5).